A 282-amino-acid chain; its full sequence is Undecaprenyl-diphosphatase (282 aa).

A run of 5 helical transmembrane segments spans residues 90–110, 121–141, 194–214, 228–248, and 256–276; these read YRLG…GLFF, LWVV…AEYV, FGFL…LPDA, QLLV…AWLL, and MYWF…LLAT.

Belongs to the UppP family.

It localises to the cell membrane. It catalyses the reaction di-trans,octa-cis-undecaprenyl diphosphate + H2O = di-trans,octa-cis-undecaprenyl phosphate + phosphate + H(+). In terms of biological role, catalyzes the dephosphorylation of undecaprenyl diphosphate (UPP). Confers resistance to bacitracin. The protein is Undecaprenyl-diphosphatase of Mycobacterium tuberculosis (strain ATCC 25618 / H37Rv).